The sequence spans 795 residues: Protocadherin beta-5 (795 aa).

The signal sequence occupies residues M1–A30. Over V31–L689 the chain is Extracellular. Cadherin domains follow at residues I35–F133, M138–F242, Y247–L346, L351–F450, and Y455–V560. N-linked (GlcNAc...) asparagine glycosylation is present at N169. Residue K296 is modified to N6-acetyllysine. N-linked (GlcNAc...) asparagine glycans are attached at residues N417 and N435. A glycan (N-linked (GlcNAc...) asparagine) is linked at N566. The Cadherin 6 domain occupies G567 to L670. Residues V690–V710 traverse the membrane as a helical segment. Topologically, residues R711–N795 are cytoplasmic.

The protein resides in the cell membrane. Potential calcium-dependent cell-adhesion protein. May be involved in the establishment and maintenance of specific neuronal connections in the brain. This is Protocadherin beta-5 (PCDHB5) from Homo sapiens (Human).